Consider the following 439-residue polypeptide: Serine/threonine-protein kinase 2 (439 aa).

Positions 87-439 (NDDFYHISTG…IFSDWINGRN (353 aa)) constitute a Protein kinase domain. ATP contacts are provided by residues 93–101 (ISTGGYGIV) and K117. The Proton acceptor role is filled by D307.

Belongs to the protein kinase superfamily. Ser/Thr protein kinase family. Phosphorylated in vivo. Autophosphorylated in vitro.

Its subcellular location is the host endoplasmic reticulum. It is found in the host endoplasmic reticulum-Golgi intermediate compartment. The enzyme catalyses L-seryl-[protein] + ATP = O-phospho-L-seryl-[protein] + ADP + H(+). It carries out the reaction L-threonyl-[protein] + ATP = O-phospho-L-threonyl-[protein] + ADP + H(+). Functionally, essential serine-protein kinase involved in the early stage of virion morphogenesis. This is Serine/threonine-protein kinase 2 (OPG054) from Monkeypox virus.